The following is a 246-amino-acid chain: 1-(5-phosphoribosyl)-5-[(5-phosphoribosylamino)methylideneamino] imidazole-4-carboxamide isomerase (246 aa).

The Proton acceptor role is filled by D8. D129 acts as the Proton donor in catalysis.

Belongs to the HisA/HisF family.

It localises to the cytoplasm. It catalyses the reaction 1-(5-phospho-beta-D-ribosyl)-5-[(5-phospho-beta-D-ribosylamino)methylideneamino]imidazole-4-carboxamide = 5-[(5-phospho-1-deoxy-D-ribulos-1-ylimino)methylamino]-1-(5-phospho-beta-D-ribosyl)imidazole-4-carboxamide. It participates in amino-acid biosynthesis; L-histidine biosynthesis; L-histidine from 5-phospho-alpha-D-ribose 1-diphosphate: step 4/9. In Desulforamulus reducens (strain ATCC BAA-1160 / DSM 100696 / MI-1) (Desulfotomaculum reducens), this protein is 1-(5-phosphoribosyl)-5-[(5-phosphoribosylamino)methylideneamino] imidazole-4-carboxamide isomerase.